A 663-amino-acid polypeptide reads, in one-letter code: Alcohol oxidase 1 (663 aa).

8–38 lines the FAD pocket; it reads DILVLGGGSSGSCIAGRLANLDHSLKVGLIE. The active-site Proton acceptor is His-567. The Microbody targeting signal motif lies at 661–663; it reads ARF.

This sequence belongs to the GMC oxidoreductase family. Homooctamer. It depends on FAD as a cofactor.

The protein localises to the peroxisome matrix. The enzyme catalyses a primary alcohol + O2 = an aldehyde + H2O2. It functions in the pathway energy metabolism; methane degradation. In terms of biological role, major isoform of alcohol oxidase, which catalyzes the oxidation of methanol to formaldehyde and hydrogen peroxide, the first step in the methanol utilization pathway of methylotrophic yeasts. The chain is Alcohol oxidase 1 (AOX1) from Komagataella phaffii (strain ATCC 76273 / CBS 7435 / CECT 11047 / NRRL Y-11430 / Wegner 21-1) (Yeast).